Consider the following 343-residue polypeptide: Lumican (343 aa).

The signal sequence occupies residues methionine 1 to cysteine 18. A Pyrrolidone carboxylic acid modification is found at glutamine 19. Tyrosine 20 and tyrosine 22 each carry sulfotyrosine. The LRRNT domain occupies aspartate 31–serine 69. LRR repeat units lie at residues glycine 70 to asparagine 91, aspartate 94 to lysine 117, asparagine 120 to lysine 140, threonine 141 to glycine 162, asparagine 165 to lysine 186, serine 190 to serine 211, leucine 212 to glycine 232, and threonine 235 to valine 255. An N-linked (GlcNAc...) (keratan sulfate) asparagine glycan is attached at asparagine 91. N-linked (GlcNAc...) (keratan sulfate) asparagine glycosylation is present at asparagine 130. N-linked (GlcNAc...) (keratan sulfate) asparagine glycosylation occurs at asparagine 165. The N-linked (GlcNAc...) (keratan sulfate) asparagine glycan is linked to asparagine 257. LRR repeat units lie at residues serine 260 to leucine 281, glutamate 282 to lysine 301, and lysine 310 to methionine 330. Cysteines 300 and 333 form a disulfide. The N-linked (GlcNAc...) asparagine glycan is linked to asparagine 320.

This sequence belongs to the small leucine-rich proteoglycan (SLRP) family. SLRP class II subfamily. In terms of assembly, binds to laminin. In terms of processing, contains keratan sulfate. As to expression, cornea and other tissues.

The protein localises to the secreted. Its subcellular location is the extracellular space. It localises to the extracellular matrix. The polypeptide is Lumican (LUM) (Gallus gallus (Chicken)).